The following is a 406-amino-acid chain: MVHCAGCKRPILDRFLLNVLDRAWHVKCVQCCECKCNLTEKCFSREGKLYCKNDFFRCFGTKCAGCAQGISPSDLVRRARSKVFHLNCFTCMMCNKQLSTGEELYIIDENKFVCKEDYLSNSSVAKENSLHSATTGSDPSLSPDSQDPSQDDAKDSESANVSDKEGGSNENDDQNLGAKRRGPRTTIKAKQLETLKAAFAATPKPTRHIREQLAQETGLNMRVIQVWFQNRRSKERRMKQLSALGARRHAFFRSPRRMRPLVDRLEPGELIPNGPFSFYGDYQSEYYGPGGNYDFFPQGPPSSQAQTPVDLPFVPSSGPSGTPLGGLEHPLPGHHPSSEAQRFTDILAHPPGDSPSPEPSLPGPLHSMSAEVFGPSPPFSSLSVNGGASYGNHLSHPPEMNEAAVW.

LIM zinc-binding domains are found at residues 4-54 and 63-117; these read CAGC…CKND and CAGC…CKED. 2 disordered regions span residues 128–189 and 293–374; these read NSLH…TIKA and YDFF…EVFG. Residues 137-148 are compositionally biased toward low complexity; sequence SDPSLSPDSQDP. A compositionally biased stretch (basic and acidic residues) spans 151–167; that stretch reads DDAKDSESANVSDKEGG. Position 162 is a phosphoserine (serine 162). Positions 180–239 form a DNA-binding region, homeobox; the sequence is RRGPRTTIKAKQLETLKAAFAATPKPTRHIREQLAQETGLNMRVIQVWFQNRRSKERRMK. Over residues 315–327 the composition is skewed to low complexity; sequence PSSGPSGTPLGGL. Over residues 352-362 the composition is skewed to pro residues; the sequence is GDSPSPEPSLP.

In terms of assembly, interacts with LDB1 via the tandem LIM domains.

It is found in the nucleus. Potential transcription factor. May play a role in early mesoderm formation and later in lateral mesoderm differentiation and neurogenesis. The protein is LIM/homeobox protein Lhx1 (LHX1) of Saimiri boliviensis boliviensis (Bolivian squirrel monkey).